The chain runs to 485 residues: Beta-amyrin 28-monooxygenase CYP716A378 (485 aa).

The helical; Signal-anchor for type II membrane protein transmembrane segment at 3-23 threads the bilayer; it reads LFFICGLVLFSTLSLISLFLL. N-linked (GlcNAc...) asparagine glycans are attached at residues asparagine 25 and asparagine 386. Heme is bound at residue cysteine 426.

This sequence belongs to the cytochrome P450 family. The cofactor is heme. In terms of tissue distribution, mainly expressed in flowers and flower buds, to a lesser extent in young leaves and, at low levels, in old leaves, stems and roots.

The protein resides in the membrane. It catalyses the reaction beta-amyrin + 3 reduced [NADPH--hemoprotein reductase] + 3 O2 = oleanolate + 3 oxidized [NADPH--hemoprotein reductase] + 4 H2O + 4 H(+). The protein operates within secondary metabolite biosynthesis; terpenoid biosynthesis. In terms of biological role, component of the oleanane-type triterpene saponins (e.g. saponarioside A and saponarioside B) biosynthetic pathway, leading to the production of natural products with detergent properties used as traditional sources of soap. An oxidoreductase that facilitates the oxidation of the methyl group to a carboxyl group at the C-28 position of beta-amyrin, resulting in the formation of oleanolate. This chain is Beta-amyrin 28-monooxygenase CYP716A378, found in Saponaria officinalis (Common soapwort).